A 79-amino-acid polypeptide reads, in one-letter code: D-alanyl carrier protein (79 aa).

A Carrier domain is found at 1–77; that stretch reads MTVEEKIIDA…KIVEGVKELQ (77 aa). Ser-35 is modified (O-(pantetheine 4'-phosphoryl)serine).

Belongs to the DltC family. 4'-phosphopantetheine is transferred from CoA to a specific serine of apo-DCP.

It localises to the cytoplasm. Its pathway is cell wall biogenesis; lipoteichoic acid biosynthesis. Its function is as follows. Carrier protein involved in the D-alanylation of lipoteichoic acid (LTA). The loading of thioester-linked D-alanine onto DltC is catalyzed by D-alanine--D-alanyl carrier protein ligase DltA. The DltC-carried D-alanyl group is further transferred to cell membrane phosphatidylglycerol (PG) by forming an ester bond, probably catalyzed by DltD. D-alanylation of LTA plays an important role in modulating the properties of the cell wall in Gram-positive bacteria, influencing the net charge of the cell wall. This is D-alanyl carrier protein from Streptococcus uberis (strain ATCC BAA-854 / 0140J).